Here is a 181-residue protein sequence, read N- to C-terminus: MRFKAELMNAPEMRRALYRIAHEIVEANKGTEGLALVGIHTRGIPLAHRIARFIAEFEGKEVPVGVLDITLYRDDLTEIGYRPQVRETRIPFDLTGKAIVLVDDVLYTGRTARAALDALIDLGRPRRIYLAVLVDRGHRELPIRADFVGKNVPTSRNEVVKVKVEEVDGEDRVELWEKEGA.

Substrate contacts are provided by residues 41–42 (TR), Arg-82, Arg-86, 103–111 (DDVLYTGRT), Arg-136, and Val-160. A PRPP-binding motif is present at residues 99–111 (IVLVDDVLYTGRT).

Belongs to the purine/pyrimidine phosphoribosyltransferase family. PyrR subfamily.

The enzyme catalyses UMP + diphosphate = 5-phospho-alpha-D-ribose 1-diphosphate + uracil. Functionally, probably regulates transcriptional attenuation of the pyrimidine nucleotide (pyr) operon in response to exogenous pyrimidines. In contrast to pyr attenuation in Bacillus spp., PyrR from Thermus could act as a translational repressor: the binding of PyrR at its proposed recognition site in the transcript would prevent initiation of translation of the leader peptide, resulting in terminator formation and reduced expression of downstream genes. Its function is as follows. Also displays a uracil phosphoribosyltransferase activity. This chain is Bifunctional protein PyrR (pyrR), found in Thermus aquaticus.